A 360-amino-acid polypeptide reads, in one-letter code: Isopentenyl-diphosphate delta-isomerase (360 aa).

12-13 provides a ligand contact to substrate; that stretch reads RK. FMN is bound by residues 69–71, S99, and N130; that span reads SMT. 99–101 is a substrate binding site; that stretch reads SQR. Residue Q164 coordinates substrate. E165 contacts Mg(2+). FMN is bound by residues K196, T226, 277 to 279, and 298 to 299; these read GVR and AK.

The protein belongs to the IPP isomerase type 2 family. In terms of assembly, homooctamer. Dimer of tetramers. FMN is required as a cofactor. Requires NADPH as cofactor. It depends on Mg(2+) as a cofactor.

Its subcellular location is the cytoplasm. It catalyses the reaction isopentenyl diphosphate = dimethylallyl diphosphate. In terms of biological role, involved in the biosynthesis of isoprenoids. Catalyzes the 1,3-allylic rearrangement of the homoallylic substrate isopentenyl (IPP) to its allylic isomer, dimethylallyl diphosphate (DMAPP). This chain is Isopentenyl-diphosphate delta-isomerase, found in Halobacterium salinarum (strain ATCC 700922 / JCM 11081 / NRC-1) (Halobacterium halobium).